A 731-amino-acid polypeptide reads, in one-letter code: Anaphase-promoting complex subunit 2 (731 aa).

Belongs to the cullin family. In terms of assembly, the APC/C is probably composed of at least 12 subunits: apc-2, apc-10, apc-11, cdc-26, emb-1, emb-27, emb-30, mat-1, mat-2, mat-3, such-1 and gfi-3.

It participates in protein modification; protein ubiquitination. Its function is as follows. Probable component of the anaphase promoting complex/cyclosome (APC/C), a cell cycle-regulated ubiquitin ligase that controls progression through mitosis and the G1 phase of the cell cycle. The APC/C complex acts by mediating ubiquitination and subsequent degradation of target proteins. Developmental role in early embryogenesis and the metaphase to anaphase transition in meiosis and mitosis. The protein is Anaphase-promoting complex subunit 2 of Caenorhabditis elegans.